The sequence spans 592 residues: MPSRTDPKMDRSGGRVRLKAHYGGDILITSVDPTTTFQDLCEEVRDMCGLHQQHPLTLKWVDSEGDPCTVSSQMELEEAFRLACQGRDEVLIIHVFPSIPEQPGMPCPGEDKSIYRRGARRWRKLYRANGHLFQAKRFNRRAYCGQCSERIWGLARQGYRCINCKLLVHKRCHVLVPLTCRRHMDSVMPSQEPPVDDKNDGVDLPSEETDGIAYISSSRKHDNIKDDSEDLKPVIDGVDGIKISQGLGLQDFDLIRVIGRGSYAKVLLVRLKKNDQIYAMKVVKKELVHDDEDIDWVQTEKHVFEQASSNPFLVGLHSCFQTTSRLFLVIEYVNGGDLMFHMQRQRKLPEEHARFYAAEICIALNFLHERGIIYRDLKLDNVLLDADGHIKLTDYGMCKEGLGPGDTTSTFCGTPNYIAPEILRGEEYGFSVDWWALGVLMFEMMAGRSPFDIITDNPDMNTEDYLFQVILEKPIRIPRFLSVKASHVLKGFLNKDPKERLGCRPQTGFSDIKSHAFFRSIDWDLLEKKQTLPPFQPQITDDYGLDNFDTQFTSEPVQLTPDDEDVIKRIDQSEFEGFEYINPLLLSAEESV.

Positions 15–98 (RVRLKAHYGG…EVLIIHVFPS (84 aa)) constitute a PB1 domain. The segment at 79 to 145 (AFRLACQGRD…KRFNRRAYCG (67 aa)) is interaction with SQSTM1. The Phorbol-ester/DAG-type zinc finger occupies 130–180 (GHLFQAKRFNRRAYCGQCSERIWGLARQGYRCINCKLLVHKRCHVLVPLTC). A Protein kinase domain is found at 252–518 (FDLIRVIGRG…FSDIKSHAFF (267 aa)). ATP contacts are provided by residues 258–266 (IGRGSYAKV) and lysine 281. Aspartate 376 (proton acceptor) is an active-site residue. A Phosphothreonine; by PDPK1 and PI3K modification is found at threonine 410. One can recognise an AGC-kinase C-terminal domain in the interval 519–590 (RSIDWDLLEK…INPLLLSAEE (72 aa)). Phosphothreonine is present on threonine 560. Phosphoserine is present on serine 591.

Belongs to the protein kinase superfamily. AGC Ser/Thr protein kinase family. PKC subfamily. Interacts with PARD6A, PARD6B and PARD6G. Part of a complex with PARD3, PARD6A or PARD6B or PARD6G and CDC42 or RAC1. Interacts with ADAP1/CENTA1. Forms a ternary complex with SQSTM1 and KCNAB2. Forms another ternary complex with SQSTM1 and GABRR3. Forms a complex with SQSTM1 and MAP2K5. Interacts (via the protein kinase domain) with WWC1. Forms a tripartite complex with WWC1 and DDR1, but predominantly in the absence of collagen. Component of the Par polarity complex, composed of at least phosphorylated PRKCZ, PARD3 and TIAM1. Interacts with PDPK1 (via N-terminal region). Interacts with WDFY2 (via WD repeats 1-3). Interacts with VAMP2. Forms a complex with WDFY2 and VAMP2. Interacts with APPL1. Interacts with WWC1, WWC2 and WWC3. In terms of processing, CDH5 is required for its phosphorylation at Thr-410. Phosphorylated by protein kinase PDPK1; phosphorylation is inhibited by the apoptotic C-terminal cleavage product of PKN2. Phosphorylation at Thr-410 by PI3K activates the kinase. As to expression, isoform 1: In brain, expressed in hippocampus, neocortex and cerebellum (at protein level). Also expressed in lung, liver, kidney, testis and to a lesser extent in pancreas, intestine and skin (at protein level). Isoform 2: Specifically expressed in brain where it localizes to the hippocampus, neocortex and cerebellum (at protein level).

The protein resides in the cytoplasm. It is found in the endosome. It localises to the cell junction. Its subcellular location is the membrane. The enzyme catalyses L-seryl-[protein] + ATP = O-phospho-L-seryl-[protein] + ADP + H(+). It carries out the reaction L-threonyl-[protein] + ATP = O-phospho-L-threonyl-[protein] + ADP + H(+). Atypical PKCs (PRKCI and PRKCZ) exhibit an elevated basal enzymatic activity (that may be due to the interaction with SMG1 or SQSTM1) and are not regulated by diacylglycerol, phosphatidylserine, phorbol esters or calcium ions. Two specific sites, Thr-410 (activation loop of the kinase domain) and Thr-560 (turn motif), need to be phosphorylated for its full activation. Phosphatidylinositol 3,4,5-trisphosphate might be a physiological activator. Isoform 2: Constitutively active. Functionally, calcium- and diacylglycerol-independent serine/threonine-protein kinase that functions in phosphatidylinositol 3-kinase (PI3K) pathway and mitogen-activated protein (MAP) kinase cascade, and is involved in NF-kappa-B activation, mitogenic signaling, cell proliferation, cell polarity, inflammatory response and maintenance of long-term potentiation (LTP). Upon lipopolysaccharide (LPS) treatment in macrophages, or following mitogenic stimuli, functions downstream of PI3K to activate MAP2K1/MEK1-MAPK1/ERK2 signaling cascade independently of RAF1 activation. Required for insulin-dependent activation of AKT3, but may function as an adapter rather than a direct activator. Upon insulin treatment may act as a downstream effector of PI3K and contribute to the activation of translocation of the glucose transporter SLC2A4/GLUT4 and subsequent glucose transport in adipocytes. In EGF-induced cells, binds and activates MAP2K5/MEK5-MAPK7/ERK5 independently of its kinase activity and can activate JUN promoter through MEF2C. Through binding with SQSTM1/p62, functions in interleukin-1 signaling and activation of NF-kappa-B with the specific adapters RIPK1 and TRAF6. Participates in TNF-dependent transactivation of NF-kappa-B by phosphorylating and activating IKBKB kinase, which in turn leads to the degradation of NF-kappa-B inhibitors. In migrating astrocytes, forms a cytoplasmic complex with PARD6A and is recruited by CDC42 to function in the establishment of cell polarity along with the microtubule motor and dynein. In association with FEZ1, stimulates neuronal differentiation in PC12 cells. In the inflammatory response, is required for the T-helper 2 (Th2) differentiation process, including interleukin production, efficient activation of JAK1 and the subsequent phosphorylation and nuclear translocation of STAT6. May be involved in development of allergic airway inflammation (asthma), a process dependent on Th2 immune response. In the NF-kappa-B-mediated inflammatory response, can relieve SETD6-dependent repression of NF-kappa-B target genes by phosphorylating the RELA subunit at 'Ser-311'. Phosphorylates VAMP2 in vitro. Phosphorylates and activates LRRK1, which phosphorylates RAB proteins involved in intracellular trafficking. Involved in late synaptic long term potentiation phase in CA1 hippocampal cells and long term memory maintenance. The chain is Protein kinase C zeta type (Prkcz) from Rattus norvegicus (Rat).